The following is a 75-amino-acid chain: uncharacterized protein (75 aa).

4Fe-4S ferredoxin-type domains are found at residues 2–30 and 37–68; these read SHTI…KGEG and DWYW…KEEP. 2 residues coordinate [3Fe-4S] cluster: cysteine 10 and cysteine 16. [4Fe-4S] cluster-binding residues include cysteine 20, cysteine 46, cysteine 49, and cysteine 52. Cysteine 56 provides a ligand contact to [3Fe-4S] cluster.

[4Fe-4S] cluster is required as a cofactor. The cofactor is [3Fe-4S] cluster.

Its subcellular location is the plastid. It is found in the chloroplast. This is an uncharacterized protein from Porphyra purpurea (Red seaweed).